The sequence spans 453 residues: T-box transcription factor T homolog (453 aa).

The T-box DNA-binding region spans L47–D217. The interval R283–A304 is disordered.

The protein resides in the nucleus. In terms of biological role, may be involved in the transcriptional regulation of genes required for gastrulation. The chain is T-box transcription factor T homolog from Patiria pectinifera (Starfish).